Consider the following 254-residue polypeptide: Pyridoxine 5'-phosphate synthase (254 aa).

3-amino-2-oxopropyl phosphate is bound at residue Asn12. 14–15 (DH) is a binding site for 1-deoxy-D-xylulose 5-phosphate. Arg23 is a binding site for 3-amino-2-oxopropyl phosphate. The Proton acceptor role is filled by His48. 1-deoxy-D-xylulose 5-phosphate contacts are provided by Arg50 and His55. Glu75 serves as the catalytic Proton acceptor. Thr105 serves as a coordination point for 1-deoxy-D-xylulose 5-phosphate. The active-site Proton donor is the His199. 3-amino-2-oxopropyl phosphate-binding positions include Gly200 and 221 to 222 (GF).

It belongs to the PNP synthase family. In terms of assembly, homooctamer; tetramer of dimers.

The protein resides in the cytoplasm. It carries out the reaction 3-amino-2-oxopropyl phosphate + 1-deoxy-D-xylulose 5-phosphate = pyridoxine 5'-phosphate + phosphate + 2 H2O + H(+). The protein operates within cofactor biosynthesis; pyridoxine 5'-phosphate biosynthesis; pyridoxine 5'-phosphate from D-erythrose 4-phosphate: step 5/5. Functionally, catalyzes the complicated ring closure reaction between the two acyclic compounds 1-deoxy-D-xylulose-5-phosphate (DXP) and 3-amino-2-oxopropyl phosphate (1-amino-acetone-3-phosphate or AAP) to form pyridoxine 5'-phosphate (PNP) and inorganic phosphate. The sequence is that of Pyridoxine 5'-phosphate synthase from Rhodopseudomonas palustris (strain TIE-1).